A 220-amino-acid polypeptide reads, in one-letter code: 3-dehydroquinate dehydratase (220 aa).

Residues Ser-8, 30 to 32, and Arg-63 each bind 3-dehydroquinate; that span reads ELR. The Proton donor/acceptor role is filled by His-114. The Schiff-base intermediate with substrate role is filled by Lys-140. Positions 174 and 197 each coordinate 3-dehydroquinate.

Belongs to the type-I 3-dehydroquinase family. Homodimer.

It catalyses the reaction 3-dehydroquinate = 3-dehydroshikimate + H2O. It participates in metabolic intermediate biosynthesis; chorismate biosynthesis; chorismate from D-erythrose 4-phosphate and phosphoenolpyruvate: step 3/7. Involved in the third step of the chorismate pathway, which leads to the biosynthesis of aromatic amino acids. Catalyzes the cis-dehydration of 3-dehydroquinate (DHQ) and introduces the first double bond of the aromatic ring to yield 3-dehydroshikimate. This Saccharolobus solfataricus (strain ATCC 35092 / DSM 1617 / JCM 11322 / P2) (Sulfolobus solfataricus) protein is 3-dehydroquinate dehydratase.